We begin with the raw amino-acid sequence, 37 residues long: Large ribosomal subunit protein bL36 (37 aa).

Belongs to the bacterial ribosomal protein bL36 family.

The polypeptide is Large ribosomal subunit protein bL36 (Ureaplasma parvum serovar 3 (strain ATCC 27815 / 27 / NCTC 11736)).